The primary structure comprises 636 residues: 1-deoxy-D-xylulose-5-phosphate synthase (636 aa).

Residues H73 and 114 to 116 (SHA) contribute to the thiamine diphosphate site. Mg(2+) is bound at residue D146. Residues 147 to 148 (GA), N176, Y287, and E368 each bind thiamine diphosphate. A Mg(2+)-binding site is contributed by N176.

It belongs to the transketolase family. DXPS subfamily. As to quaternary structure, homodimer. Mg(2+) is required as a cofactor. Requires thiamine diphosphate as cofactor.

It carries out the reaction D-glyceraldehyde 3-phosphate + pyruvate + H(+) = 1-deoxy-D-xylulose 5-phosphate + CO2. Its pathway is metabolic intermediate biosynthesis; 1-deoxy-D-xylulose 5-phosphate biosynthesis; 1-deoxy-D-xylulose 5-phosphate from D-glyceraldehyde 3-phosphate and pyruvate: step 1/1. Functionally, catalyzes the acyloin condensation reaction between C atoms 2 and 3 of pyruvate and glyceraldehyde 3-phosphate to yield 1-deoxy-D-xylulose-5-phosphate (DXP). This Corynebacterium glutamicum (strain ATCC 13032 / DSM 20300 / JCM 1318 / BCRC 11384 / CCUG 27702 / LMG 3730 / NBRC 12168 / NCIMB 10025 / NRRL B-2784 / 534) protein is 1-deoxy-D-xylulose-5-phosphate synthase.